The primary structure comprises 392 residues: Flavohemoprotein (392 aa).

The region spanning 1–139 is the Globin domain; the sequence is MLNAEQRAII…LADILIGAEE (139 aa). Histidine 85 is a binding site for heme b. Catalysis depends on charge relay system residues tyrosine 95 and glutamate 138. Residues 150–392 form a reductase region; it reads GGWRGTREFR…EFFGPAAALE (243 aa). The region spanning 153 to 256 is the FAD-binding FR-type domain; that stretch reads RGTREFRLVR…FPPAGDFTLA (104 aa). FAD contacts are provided by residues tyrosine 191 and 205 to 208; that span reads RNYS. Residue 268-273 coordinates NADP(+); sequence GVGITP. Residue 384–387 participates in FAD binding; it reads FFGP.

The protein belongs to the globin family. Two-domain flavohemoproteins subfamily. It in the C-terminal section; belongs to the flavoprotein pyridine nucleotide cytochrome reductase family. The cofactor is heme b. FAD serves as cofactor.

The catalysed reaction is 2 nitric oxide + NADPH + 2 O2 = 2 nitrate + NADP(+) + H(+). It catalyses the reaction 2 nitric oxide + NADH + 2 O2 = 2 nitrate + NAD(+) + H(+). In terms of biological role, is involved in NO detoxification in an aerobic process, termed nitric oxide dioxygenase (NOD) reaction that utilizes O(2) and NAD(P)H to convert NO to nitrate, which protects the bacterium from various noxious nitrogen compounds. Therefore, plays a central role in the inducible response to nitrosative stress. The polypeptide is Flavohemoprotein (Pseudomonas putida (strain ATCC 47054 / DSM 6125 / CFBP 8728 / NCIMB 11950 / KT2440)).